Reading from the N-terminus, the 88-residue chain is Apolipoprotein C-I (88 aa).

An N-terminal signal peptide occupies residues 1–26; that stretch reads MRLILSLPVLVVVLSMVLEGPAPAQA.

This sequence belongs to the apolipoprotein C1 family.

It localises to the secreted. Functionally, inhibitor of lipoprotein binding to the low density lipoprotein (LDL) receptor, LDL receptor-related protein, and very low density lipoprotein (VLDL) receptor. Associates with high density lipoproteins (HDL) and the triacylglycerol-rich lipoproteins in the plasma and makes up about 10% of the protein of the VLDL and 2% of that of HDL. Appears to interfere directly with fatty acid uptake and is also the major plasma inhibitor of cholesteryl ester transfer protein (CETP). Binds free fatty acids and reduces their intracellular esterification. Modulates the interaction of APOE with beta-migrating VLDL and inhibits binding of beta-VLDL to the LDL receptor-related protein. This is Apolipoprotein C-I (APOC1) from Lycaon pictus (African wild dog).